We begin with the raw amino-acid sequence, 169 residues long: Putative prolyl-tRNA synthetase associated domain-containing protein 1 (169 aa).

The protein belongs to the PRORSD1 family.

The chain is Putative prolyl-tRNA synthetase associated domain-containing protein 1 (PRORSD1P) from Homo sapiens (Human).